The sequence spans 360 residues: DNA polymerase IV (360 aa).

The 183-residue stretch at 9-191 (IMHLDIDAFY…LNINKIPYIG (183 aa)) folds into the UmuC domain. The Mg(2+) site is built by Asp13 and Asp108. Residue Glu109 is part of the active site.

Belongs to the DNA polymerase type-Y family. As to quaternary structure, monomer. Requires Mg(2+) as cofactor.

Its subcellular location is the cytoplasm. It catalyses the reaction DNA(n) + a 2'-deoxyribonucleoside 5'-triphosphate = DNA(n+1) + diphosphate. Poorly processive, error-prone DNA polymerase involved in untargeted mutagenesis. Copies undamaged DNA at stalled replication forks, which arise in vivo from mismatched or misaligned primer ends. These misaligned primers can be extended by PolIV. Exhibits no 3'-5' exonuclease (proofreading) activity. May be involved in translesional synthesis, in conjunction with the beta clamp from PolIII. This is DNA polymerase IV from Ureaplasma parvum serovar 3 (strain ATCC 27815 / 27 / NCTC 11736).